The primary structure comprises 152 residues: MGSSAITTSFLLFVAFQLPGQTGANPVYGSVSNADLMDFKNLLDRLEDKMPLEDEAVPSQVLSEQNEEAGAPLSPLSEVPPWDGGRSTQPREMGAPSDGDPGNPPRSVLLKSKLRALLTAPRSLRRSSCFGGRMDRIGAQSGLGCNSFRYRR.

An N-terminal signal peptide occupies residues 1 to 24 (MGSSAITTSFLLFVAFQLPGQTGA). 2 propeptides span residues 25-122 (NPVY…TAPR) and 92-102 (EMGAPSDGDPG). A disordered region spans residues 50 to 108 (MPLEDEAVPSQVLSEQNEEAGAPLSPLSEVPPWDGGRSTQPREMGAPSDGDPGNPPRSV). Position 128 is a phosphoserine (serine 128). The cysteines at positions 129 and 145 are disulfide-linked. The interval 146-150 (NSFRY) is important for degradation of atrial natriuretic peptide by IDE.

This sequence belongs to the natriuretic peptide family. Homodimer; disulfide-linked antiparallel dimer. The precursor molecule is proteolytically cleaved by CORIN at Arg-122 to produce the atrial natriuretic peptide. Undergoes further proteolytic cleavage by unknown proteases to give rise to long-acting natriuretic peptide, vessel dilator and kaliuretic peptide. Additional processing gives rise to the auriculin and atriopeptin peptides. In the kidneys, alternative processing by an unknown protease results in the peptide urodilatin. In terms of processing, cleavage by MME initiates degradation of the factor and thereby regulates its activity. Degradation by IDE results in reduced activation of NPR1 (in vitro). During IDE degradation, the resulting products can temporarily stimulate NPR2 to produce cGMP, before the fragments are completely degraded and inactivated by IDE (in vitro). Post-translationally, degraded by IDE. Phosphorylation on Ser-128 decreases vasorelaxant activity.

The protein resides in the secreted. It is found in the perikaryon. Its subcellular location is the cell projection. Functionally, hormone that plays a key role in mediating cardio-renal homeostasis, and is involved in vascular remodeling and regulating energy metabolism. Acts by specifically binding and stimulating NPR1 to produce cGMP, which in turn activates effector proteins, such as PRKG1, that drive various biological responses. Regulates vasodilation, natriuresis, diuresis and aldosterone synthesis and is therefore essential for regulating blood pressure, controlling the extracellular fluid volume and maintaining the fluid-electrolyte balance. Also involved in inhibiting cardiac remodeling and cardiac hypertrophy by inducing cardiomyocyte apoptosis and attenuating the growth of cardiomyocytes and fibroblasts. Plays a role in female pregnancy by promoting trophoblast invasion and spiral artery remodeling in uterus, and thus prevents pregnancy-induced hypertension. In adipose tissue, acts in various cGMP- and PKG-dependent pathways to regulate lipid metabolism and energy homeostasis. This includes up-regulating lipid metabolism and mitochondrial oxygen utilization by activating the AMP-activated protein kinase (AMPK), and increasing energy expenditure by acting via MAPK11 to promote the UCP1-dependent thermogenesis of brown adipose tissue. Binds the clearance receptor NPR3 which removes the hormone from circulation. Its function is as follows. May have a role in cardio-renal homeostasis through regulation of natriuresis, diuresis, vasodilation, and inhibiting aldosterone synthesis. In vitro, promotes the production of cGMP and induces vasodilation. May promote natriuresis, at least in part, by enhancing prostaglandin E2 synthesis resulting in the inhibition of renal Na+-K+-ATPase. However reports on the involvement of this peptide in mammal blood volume and blood pressure homeostasis are conflicting; according to a report, in vivo it is not sufficient to activate cGMP and does not inhibit collecting duct transport nor effect diuresis and natriuresis. Appears to bind to specific receptors that are distinct from the receptors bound by atrial natriuretic peptide and vessel dilator. Possibly enhances protein excretion in urine by decreasing proximal tubular protein reabsorption. May have a role in cardio-renal homeostasis through regulation of natriuresis, diuresis, and vasodilation. In vitro, promotes the production of cGMP and induces vasodilation. May promote natriuresis, at least in part, by enhancing prostaglandin E2 synthesis resulting in the inhibition of renal Na+-K+-ATPase. However reports on the involvement of this peptide in mammal blood volume and blood pressure homeostasis are conflicting; according to a report it is not sufficient to activate cGMP and does not inhibit collecting duct transport nor effect diuresis and natriuresis. Appears to bind to specific receptors that are distinct from the receptors bound by the atrial natriuretic and long-acting natriuretic peptides. Possibly functions in protein excretion in urine by maintaining the integrity of the proximal tubules and enhancing protein excretion by decreasing proximal tubular protein reabsorption. In terms of biological role, may have a role in cardio-renal homeostasis through regulation of diuresis and inhibiting aldosterone synthesis. In vitro, promotes the production of cGMP and induces vasodilation. May promote natriuresis, at least in part, by enhancing prostaglandin E2 synthesis resulting in the inhibition of renal Na+-K+-ATPase. May have a role in potassium excretion but not sodium excretion (natriuresis). Possibly enhances protein excretion in urine by decreasing proximal tubular protein reabsorption. Functionally, hormone produced in the kidneys that appears to be important for maintaining cardio-renal homeostasis. Mediates vasodilation, natriuresis and diuresis primarily in the renal system, in order to maintain the extracellular fluid volume and control the fluid-electrolyte balance. Specifically binds and stimulates cGMP production by renal transmembrane receptors, likely NPR1. Urodilatin not ANP, may be the natriuretic peptide responsible for the regulation of sodium and water homeostasis in the kidney. Its function is as follows. May have a role in cardio-renal homeostasis through regulation of natriuresis and vasodilation. In vivo promotes natriuresis and in vitro, vasodilates renal artery strips. May have a role in cardio-renal homeostasis through regulation of regulation of natriuresis and vasodilation. In vivo promotes natriuresis. In vitro, vasodilates intestinal smooth muscle but not smooth muscle strips. In terms of biological role, may have a role in cardio-renal homeostasis through regulation of natriuresis and vasodilation. In vivo promotes natriuresis. In vitro, selectively vasodilates intestinal and vascular smooth muscle strips. Functionally, may have a role in cardio-renal homeostasis through regulation of natriuresis and vasodilation. In vivo promotes natriuresis. In vitro, selectively vasodilates intestinal smooth muscle but not vascular smooth muscle strips. In Ovis aries (Sheep), this protein is Natriuretic peptides A (NPPA).